Here is a 577-residue protein sequence, read N- to C-terminus: Adenine deaminase (577 aa).

The protein belongs to the metallo-dependent hydrolases superfamily. Adenine deaminase family. The cofactor is Mn(2+).

The enzyme catalyses adenine + H2O + H(+) = hypoxanthine + NH4(+). This chain is Adenine deaminase, found in Kosmotoga olearia (strain ATCC BAA-1733 / DSM 21960 / TBF 19.5.1).